Here is a 338-residue protein sequence, read N- to C-terminus: Lipoate-protein ligase A (338 aa).

The BPL/LPL catalytic domain occupies 29–216 (PADQRVLFLW…AYCEHYQQQV (188 aa)). ATP is bound by residues Arg71, 76 to 79 (GAVF), and Lys134. Lys134 lines the (R)-lipoate pocket.

It belongs to the LplA family. In terms of assembly, monomer.

It is found in the cytoplasm. It catalyses the reaction L-lysyl-[lipoyl-carrier protein] + (R)-lipoate + ATP = N(6)-[(R)-lipoyl]-L-lysyl-[lipoyl-carrier protein] + AMP + diphosphate + H(+). The protein operates within protein modification; protein lipoylation via exogenous pathway; protein N(6)-(lipoyl)lysine from lipoate: step 1/2. It functions in the pathway protein modification; protein lipoylation via exogenous pathway; protein N(6)-(lipoyl)lysine from lipoate: step 2/2. Catalyzes both the ATP-dependent activation of exogenously supplied lipoate to lipoyl-AMP and the transfer of the activated lipoyl onto the lipoyl domains of lipoate-dependent enzymes. The sequence is that of Lipoate-protein ligase A from Vibrio cholerae serotype O1 (strain ATCC 39541 / Classical Ogawa 395 / O395).